We begin with the raw amino-acid sequence, 396 residues long: MAEDGLPKIYSHPPTESSKTPTAATIFFGADNAIPKSETTITSEGDHVTSVNEYVLESDFSTTADNKLTPTKEKLRSEDDMGTDFIKSTTHLQKEITSLTGTANSITRDSITENFMTVKIGNISSPVTTVSLIDFSTDIAKEDILLDTIDTGDAEILITSEVSGTLKDSSAGVADTPAFPRIKDEADMNNYNSSIKSNVPADEAIQVTDSIIPEAEIPPAPEVNFTTIPDITALEEEKMTKIDLSVLEDDTSAVATLTDSDEEKFITVFELTTSAEKDKDNQEDTLLTDEESPEGANMWMERETATEAETHSVLLTAVESRYDFVVPASIATNLVEDSSTEEELSETDRTETVPKITEPFSGTSSVLDTPDYKEDTSTTETDIFELLKEEPDEFMI.

The disordered stretch occupies residues 1-21; that stretch reads MAEDGLPKIYSHPPTESSKTP. The residue at position 274 (Ser274) is a Phosphoserine. A disordered region spans residues 276–296; it reads EKDKDNQEDTLLTDEESPEGA. Positions 283–293 are enriched in acidic residues; that stretch reads EDTLLTDEESP. Thr288 carries the phosphothreonine; by CK2 modification. Phosphoserine occurs at positions 320 and 377. The segment at 336 to 396 is disordered; sequence EDSSTEEELS…LKEEPDEFMI (61 aa).

Its subcellular location is the cytoplasm. The protein localises to the mitochondrion inner membrane. It localises to the cell projection. It is found in the cilium. The protein resides in the flagellum. Its subcellular location is the cytoplasmic vesicle. The protein localises to the secretory vesicle. It localises to the acrosome. In terms of biological role, calcium-binding protein. Essential for maintaining the structural integrity of the sperm flagella. This chain is Calcium-binding and spermatid-specific protein 1 (CABS1), found in Macaca fascicularis (Crab-eating macaque).